The sequence spans 319 residues: 4-diphosphocytidyl-2-C-methyl-D-erythritol kinase (319 aa).

Lys18 is a catalytic residue. 103–113 contributes to the ATP binding site; sequence PIGAGLAGGST. The active site involves Asp145.

The protein belongs to the GHMP kinase family. IspE subfamily.

It carries out the reaction 4-CDP-2-C-methyl-D-erythritol + ATP = 4-CDP-2-C-methyl-D-erythritol 2-phosphate + ADP + H(+). It participates in isoprenoid biosynthesis; isopentenyl diphosphate biosynthesis via DXP pathway; isopentenyl diphosphate from 1-deoxy-D-xylulose 5-phosphate: step 3/6. In terms of biological role, catalyzes the phosphorylation of the position 2 hydroxy group of 4-diphosphocytidyl-2C-methyl-D-erythritol. This chain is 4-diphosphocytidyl-2-C-methyl-D-erythritol kinase, found in Prochlorococcus marinus (strain NATL2A).